The sequence spans 381 residues: Cytochrome b (381 aa).

4 helical membrane passes run 34 to 54, 78 to 99, 114 to 134, and 179 to 199; these read FGSL…FLAM, WLIR…YLHI, WNIG…GYVL, and FFAF…IHLL. Heme b-binding residues include histidine 84 and histidine 98. Positions 183 and 197 each coordinate heme b. Histidine 202 lines the a ubiquinone pocket. A run of 4 helical transmembrane segments spans residues 227 to 247, 289 to 309, 321 to 341, and 348 to 368; these read YKDI…TLFI, LGGV…PLLQ, MTQI…WIGG, and FIMV…IIIP.

Belongs to the cytochrome b family. The cytochrome bc1 complex contains 3 respiratory subunits (MT-CYB, CYC1 and UQCRFS1), 2 core proteins (UQCRC1 and UQCRC2) and probably 6 low-molecular weight proteins. Requires heme b as cofactor.

It localises to the mitochondrion inner membrane. In terms of biological role, component of the ubiquinol-cytochrome c reductase complex (complex III or cytochrome b-c1 complex) that is part of the mitochondrial respiratory chain. The b-c1 complex mediates electron transfer from ubiquinol to cytochrome c. Contributes to the generation of a proton gradient across the mitochondrial membrane that is then used for ATP synthesis. This is Cytochrome b (mt-cyb) from Galeocerdo cuvier (Tiger shark).